The sequence spans 288 residues: Protease HtpX (288 aa).

2 consecutive transmembrane segments (helical) span residues 4–24 and 33–53; these read ILLFLATNFAVLFVFNIILTL and VGLLIFATLFGFTGSIISLLM. His139 is a Zn(2+) binding site. Glu140 is a catalytic residue. His143 contributes to the Zn(2+) binding site. 2 helical membrane passes run 146–166 and 186–206; these read SGDMVTMTLLQGVLNTFVIFI and IYFMISMVLELVFGVLASMIA. Glu214 contributes to the Zn(2+) binding site.

The protein belongs to the peptidase M48B family. Requires Zn(2+) as cofactor.

The protein resides in the cell inner membrane. The sequence is that of Protease HtpX from Histophilus somni (strain 2336) (Haemophilus somnus).